A 702-amino-acid polypeptide reads, in one-letter code: Polyribonucleotide nucleotidyltransferase (702 aa).

Mg(2+) is bound by residues D493 and D499. One can recognise a KH domain in the interval 560-619 (PRLLTMRIDPERIRDVIGKGGATIRGLTEETGTNIDISDEGVVTIASADKAAAEEAKKRI). In terms of domain architecture, S1 motif spans 629 to 697 (GKVYDGKVAK…RQGRIRLSMK (69 aa)).

Belongs to the polyribonucleotide nucleotidyltransferase family. Component of the RNA degradosome, which is a multiprotein complex involved in RNA processing and mRNA degradation. Mg(2+) is required as a cofactor.

The protein localises to the cytoplasm. It catalyses the reaction RNA(n+1) + phosphate = RNA(n) + a ribonucleoside 5'-diphosphate. Its function is as follows. Involved in mRNA degradation. Catalyzes the phosphorolysis of single-stranded polyribonucleotides processively in the 3'- to 5'-direction. The polypeptide is Polyribonucleotide nucleotidyltransferase (Halorhodospira halophila (strain DSM 244 / SL1) (Ectothiorhodospira halophila (strain DSM 244 / SL1))).